Reading from the N-terminus, the 117-residue chain is Large ribosomal subunit protein bL19 (117 aa).

It belongs to the bacterial ribosomal protein bL19 family.

This protein is located at the 30S-50S ribosomal subunit interface and may play a role in the structure and function of the aminoacyl-tRNA binding site. In Azobacteroides pseudotrichonymphae genomovar. CFP2, this protein is Large ribosomal subunit protein bL19.